A 2037-amino-acid chain; its full sequence is Fatty acid synthase subunit beta (2037 aa).

The segment at 1–453 is acetyltransferase; the sequence is MSTHRPFQLT…VYDTFDGSDF (453 aa). Residue serine 261 is the For acetyltransferase activity of the active site. The enoyl reductase stretch occupies residues 465–798; it reads VKLITELPVH…GSRVMTSKES (334 aa). Residues 1132–1612 form a dehydratase region; sequence GTELNWLQAF…LPNDTLQTTM (481 aa). Residues 1506–1634 form the MaoC-like domain; that stretch reads NGKTIEESVI…KVETRNVETE (129 aa). The segment at 1613-1833 is malonyl/palmitoyl transferase; that stretch reads EHVGMINGRK…MTMQVAVPRD (221 aa). The For malonyltransferase activity role is filled by serine 1796.

This sequence belongs to the fungal fatty acid synthetase subunit beta family. As to quaternary structure, [Alpha(6)beta(6)] hexamers of two multifunctional subunits (alpha and beta).

The catalysed reaction is acetyl-CoA + n malonyl-CoA + 2n NADPH + 4n H(+) = a long-chain-acyl-CoA + n CoA + n CO2 + 2n NADP(+).. It catalyses the reaction holo-[ACP] + acetyl-CoA = acetyl-[ACP] + CoA. It carries out the reaction holo-[ACP] + malonyl-CoA = malonyl-[ACP] + CoA. The enzyme catalyses a (3R)-hydroxyacyl-[ACP] = a (2E)-enoyl-[ACP] + H2O. The catalysed reaction is a 2,3-saturated acyl-[ACP] + NAD(+) = a (2E)-enoyl-[ACP] + NADH + H(+). It catalyses the reaction (9Z)-octadecenoyl-[ACP] + H2O = (9Z)-octadecenoate + holo-[ACP] + H(+). Fatty acid synthetase catalyzes the formation of long-chain fatty acids from acetyl-CoA, malonyl-CoA and NADPH. The beta subunit contains domains for: [acyl-carrier-protein] acetyltransferase and malonyltransferase, S-acyl fatty acid synthase thioesterase, enoyl-[acyl-carrier-protein] reductase, and 3-hydroxypalmitoyl-[acyl-carrier-protein] dehydratase. The protein is Fatty acid synthase subunit beta (FAS1) of Candida albicans (Yeast).